A 333-amino-acid polypeptide reads, in one-letter code: 6-phosphogluconolactonase (333 aa).

The protein belongs to the cycloisomerase 2 family.

The enzyme catalyses 6-phospho-D-glucono-1,5-lactone + H2O = 6-phospho-D-gluconate + H(+). The protein operates within carbohydrate degradation; pentose phosphate pathway; D-ribulose 5-phosphate from D-glucose 6-phosphate (oxidative stage): step 2/3. Functionally, catalyzes the hydrolysis of 6-phosphogluconolactone to 6-phosphogluconate. This Cronobacter sakazakii (strain ATCC BAA-894) (Enterobacter sakazakii) protein is 6-phosphogluconolactonase.